A 480-amino-acid chain; its full sequence is Zinc metalloproteinase/disintegrin (480 aa).

Residues 1-20 form the signal peptide; sequence MIQVLLITICLAVFPFQGSS. A propeptide spanning residues 21-190 is cleaved from the precursor; sequence IVLDSGNLNE…KASQLNVSPD (170 aa). Residues 197-391 form the Peptidase M12B domain; the sequence is RFIKLAIYVD…HSPQCILNDP (195 aa). Residues N259 and N279 are each glycosylated (N-linked (GlcNAc...) asparagine). Intrachain disulfides connect C308–C386, C348–C370, C350–C353, C413–C428, C415–C423, C422–C445, C436–C442, C441–C466, and C454–C473. H333 is a Zn(2+) binding site. The active site involves E334. Residues H337 and H343 each contribute to the Zn(2+) site. Residues 399–480 enclose the Disintegrin domain; sequence TPVSGNELLE…AGCPRNPFHA (82 aa). The Cell attachment site motif lies at 458 to 460; that stretch reads RGD.

This sequence belongs to the venom metalloproteinase (M12B) family. P-II subfamily. P-IIa sub-subfamily. In terms of assembly, monomer. Zn(2+) serves as cofactor. Expressed by the venom gland.

The protein localises to the secreted. In terms of biological role, impairs hemostasis in the envenomed animal. Its function is as follows. Inhibits platelet aggregation and bone resorption. The sequence is that of Zinc metalloproteinase/disintegrin from Gloydius halys (Chinese water mocassin).